The following is a 356-amino-acid chain: MRVTDFSFELPESLIAHYPMPERSSCRLLSLDGPTGALTHGTFTDLLDKLNPGDLLVFNNTRVIPARLFGRKASGGKIEVLVERMLDDKRILAHIRASKAPKPGAELLLGDDESINATMTARHGALFEVEFNDQRSVLDILNSIGHMPLPPYIDRPDEDADRELYQTVYSEKPGAVAAPTAGLHFDEPLLEKLRAKGVEMAFVTLHVGAGTFQPVRVDTIEDHIMHSEYAEVPQDVVDAVLAAKARGNRVIAVGTTSVRSLESAAQAAKNDLIEPFFDDTQIFIYPGFQYKVVDALVTNFHLPESTLIMLVSAFAGYQHTMNAYKAAVEEKYRFFSYGDAMFITYNPQAINERVGE.

It belongs to the QueA family. Monomer.

It localises to the cytoplasm. The catalysed reaction is 7-aminomethyl-7-carbaguanosine(34) in tRNA + S-adenosyl-L-methionine = epoxyqueuosine(34) in tRNA + adenine + L-methionine + 2 H(+). It functions in the pathway tRNA modification; tRNA-queuosine biosynthesis. Transfers and isomerizes the ribose moiety from AdoMet to the 7-aminomethyl group of 7-deazaguanine (preQ1-tRNA) to give epoxyqueuosine (oQ-tRNA). This Escherichia coli O6:K15:H31 (strain 536 / UPEC) protein is S-adenosylmethionine:tRNA ribosyltransferase-isomerase.